We begin with the raw amino-acid sequence, 255 residues long: 5-oxoprolinase subunit A (255 aa).

Belongs to the LamB/PxpA family. As to quaternary structure, forms a complex composed of PxpA, PxpB and PxpC.

The catalysed reaction is 5-oxo-L-proline + ATP + 2 H2O = L-glutamate + ADP + phosphate + H(+). In terms of biological role, catalyzes the cleavage of 5-oxoproline to form L-glutamate coupled to the hydrolysis of ATP to ADP and inorganic phosphate. The polypeptide is 5-oxoprolinase subunit A (Thermococcus onnurineus (strain NA1)).